Consider the following 497-residue polypeptide: Bifunctional protein GlmU (497 aa).

The segment at 1 to 252 is pyrophosphorylase; the sequence is MSQPSARPSA…VWEVEGANDR (252 aa). Residues 14 to 17, Lys-28, Gln-86, 91 to 92, 115 to 117, Gly-154, Glu-169, Asn-192, and Asn-250 each bind UDP-N-acetyl-alpha-D-glucosamine; these read LAAG, GT, and YGD. Asp-117 provides a ligand contact to Mg(2+). Asn-250 contributes to the Mg(2+) binding site. Residues 253–273 are linker; the sequence is RQLSDLGRRLNERVLRHWMKE. Positions 274-497 are N-acetyltransferase; it reads GVTVVDPSST…AGAEGSGAQG (224 aa). UDP-N-acetyl-alpha-D-glucosamine is bound by residues Arg-355 and Lys-373. Catalysis depends on His-385, which acts as the Proton acceptor. UDP-N-acetyl-alpha-D-glucosamine is bound by residues Tyr-388 and Asn-399. Residues 408–409, Ser-427, and Ala-445 contribute to the acetyl-CoA site; that span reads NY. Residues 473–497 are disordered; sequence PAKRPGTSSAEAARAAGAEGSGAQG. Positions 480–490 are enriched in low complexity; the sequence is SSAEAARAAGA.

The protein in the N-terminal section; belongs to the N-acetylglucosamine-1-phosphate uridyltransferase family. It in the C-terminal section; belongs to the transferase hexapeptide repeat family. Homotrimer. Mg(2+) serves as cofactor.

It localises to the cytoplasm. The catalysed reaction is alpha-D-glucosamine 1-phosphate + acetyl-CoA = N-acetyl-alpha-D-glucosamine 1-phosphate + CoA + H(+). The enzyme catalyses N-acetyl-alpha-D-glucosamine 1-phosphate + UTP + H(+) = UDP-N-acetyl-alpha-D-glucosamine + diphosphate. Its pathway is nucleotide-sugar biosynthesis; UDP-N-acetyl-alpha-D-glucosamine biosynthesis; N-acetyl-alpha-D-glucosamine 1-phosphate from alpha-D-glucosamine 6-phosphate (route II): step 2/2. It functions in the pathway nucleotide-sugar biosynthesis; UDP-N-acetyl-alpha-D-glucosamine biosynthesis; UDP-N-acetyl-alpha-D-glucosamine from N-acetyl-alpha-D-glucosamine 1-phosphate: step 1/1. It participates in bacterial outer membrane biogenesis; LPS lipid A biosynthesis. In terms of biological role, catalyzes the last two sequential reactions in the de novo biosynthetic pathway for UDP-N-acetylglucosamine (UDP-GlcNAc). The C-terminal domain catalyzes the transfer of acetyl group from acetyl coenzyme A to glucosamine-1-phosphate (GlcN-1-P) to produce N-acetylglucosamine-1-phosphate (GlcNAc-1-P), which is converted into UDP-GlcNAc by the transfer of uridine 5-monophosphate (from uridine 5-triphosphate), a reaction catalyzed by the N-terminal domain. This Micrococcus luteus (strain ATCC 4698 / DSM 20030 / JCM 1464 / CCM 169 / CCUG 5858 / IAM 1056 / NBRC 3333 / NCIMB 9278 / NCTC 2665 / VKM Ac-2230) (Micrococcus lysodeikticus) protein is Bifunctional protein GlmU.